The chain runs to 1482 residues: Cystic fibrosis transmembrane conductance regulator (1482 aa).

Topologically, residues 1–77 (MQRSPLEKAN…KLINALRRCF (77 aa)) are cytoplasmic. Residues 78-98 (FWRFVFHGIILYLGEVTKAVQ) traverse the membrane as a helical segment. An ABC transmembrane type-1 1 domain is found at 81–365 (FVFHGIILYL…WAVQTWYDSL (285 aa)). Residues 99–122 (PLLLGRIIASYDPDNKVERSIAIY) are Extracellular-facing. A helical membrane pass occupies residues 123 to 146 (LGIGLCLLFIVRTLLLHPAIFGLH). Over 147-195 (HMGMQMRIALFSLIYKKTLKLSSRVLDKISTGQLISLLSNNLNKFDEGL) the chain is Cytoplasmic. Residues 196–216 (ALAHFVWIVPLQVVLLMGLLW) traverse the membrane as a helical segment. At 217–222 (DLLQAS) the chain is on the extracellular side. Residues 223-243 (AFCGLAFLIVLALFQAWLGQM) form a helical membrane-spanning segment. Topologically, residues 244-298 (MMKYRERRAGKINERLVITSEMIDNIQSVKAYCWEEAMEKMIENLRETELKLTRK) are cytoplasmic. A helical transmembrane segment spans residues 299–319 (TAYVRYFNSSAFFFSGFFVVF). Residues 320 to 339 (LAVLPYALIKGIILRKIFTT) lie on the Extracellular side of the membrane. A helical transmembrane segment spans residues 340 to 358 (ISFCIVLRMAVTRQFPWAV). The Cytoplasmic segment spans residues 359–859 (QTWYDSLGAI…YLRYITIHKN (501 aa)). Residues Trp401, Ser434, 458–465 (GSTGAGKT), and Gln493 contribute to the ATP site. Positions 423-646 (NGDNGLFFSN…RPDFSSKLMG (224 aa)) constitute an ABC transporter 1 domain. Cys524 is lipidated: S-palmitoyl cysteine. Ser549 and Ser660 each carry phosphoserine. Residues 654–832 (SAERRSSILT…DEINEEDLKE (179 aa)) are disordered R region. Ser670 carries the post-translational modification Phosphoserine; by PKA. The residue at position 686 (Ser686) is a Phosphoserine. Lys688 participates in a covalent cross-link: Glycyl lysine isopeptide (Lys-Gly) (interchain with G-Cter in ubiquitin). 6 positions are modified to phosphoserine: Ser700, Ser712, Ser737, Ser769, Ser796, and Ser814. A helical membrane pass occupies residues 860-880 (LVFVLIWCLVIFLVEVAASLV). Residues 860–1156 (LVFVLIWCLV…AVNSSIDVDS (297 aa)) enclose the ABC transmembrane type-1 2 domain. Residues 881 to 919 (GLWLLEDISFKDKTNGTNGANNTFPVIITDTSKYYLFYI) lie on the Extracellular side of the membrane. 2 N-linked (GlcNAc...) asparagine glycosylation sites follow: Asn895 and Asn901. The discontinuously helical transmembrane segment at 920 to 940 (YVGIADTFFALGIFRGLPLVH) threads the bilayer. The Cytoplasmic portion of the chain corresponds to 941–991 (TLISVSKILHHKMLYSVLKAPMSTFNTLKPGGILNRFSKDIAILDDLLPLT). Residues 992-1012 (IFDFIQLILIVVGALIVVSAI) traverse the membrane as a helical segment. Residues 1013–1014 (RP) lie on the Extracellular side of the membrane. A helical transmembrane segment spans residues 1015–1035 (YIFLATVPVIIAFIMLRAYFL). Residues 1036 to 1096 (QTSQQLKQLE…TASWFLYLST (61 aa)) are Cytoplasmic-facing. Residues 1097 to 1117 (LRWFQMRIELVFVIFFIAVTF) form a helical membrane-spanning segment. The Extracellular portion of the chain corresponds to 1118 to 1131 (ISILTTGDGEGRVG). A helical transmembrane segment spans residues 1132–1152 (ILLTLAMNIMSTLQWAVNSSI). Residues 1153 to 1482 (DVDSLMRSVS…TEEEVQETRL (330 aa)) are Cytoplasmic-facing. The ABC transporter 2 domain maps to 1212-1445 (MIVKDLTAKY…KSLYRQAISH (234 aa)). Residues Tyr1221 and 1246-1253 (GRTGSGKS) each bind ATP. Positions 1388-1482 (RVLKNAFANC…TEEEVQETRL (95 aa)) are interaction with GORASP2. Cys1397 carries the S-palmitoyl cysteine lipid modification. Phosphoserine is present on residues Ser1446 and Ser1458. Positions 1480–1482 (TRL) match the PDZ-binding motif.

It belongs to the ABC transporter superfamily. ABCC family. CFTR transporter (TC 3.A.1.202) subfamily. In terms of assembly, monomer; does not require oligomerization for channel activity. May form oligomers in the membrane. Interacts with SLC26A3, SLC26A6 and NHERF1. Interacts with SHANK2. Interacts with MYO6. Interacts (via C-terminus) with GOPC (via PDZ domain); this promotes CFTR internalization and thereby decreases channel activity. Interacts with SLC4A7 through NHERF1. Found in a complex with MYO5B and RAB11A. Interacts with ANO1. Interacts with SLC26A8. Interacts with AHCYL1; the interaction increases CFTR activity. Interacts with CSE1L. The core-glycosylated form interacts with GORASP2 (via PDZ GRASP-type 1 domain) in respone to ER stress. Interacts with MARCHF2; the interaction leads to CFTR ubiqtuitination and degradation. Interacts with ADGRG2. Post-translationally, N-glycosylated. Phosphorylated; cAMP treatment promotes phosphorylation and activates the channel. Dephosphorylation decreases the ATPase activity (in vitro). Phosphorylation at PKA sites activates the channel. Phosphorylation at PKC sites enhances the response to phosphorylation by PKA. Phosphorylated by AMPK; this inhibits channel activity. In terms of processing, ubiquitinated, leading to its degradation in the lysosome. Deubiquitination by USP10 in early endosomes enhances its endocytic recycling to the cell membrane. Ubiquitinated by RNF185 during ER stress. Ubiquitinated by MARCHF2.

Its subcellular location is the apical cell membrane. It localises to the early endosome membrane. The protein localises to the cell membrane. The protein resides in the recycling endosome membrane. It is found in the endoplasmic reticulum membrane. Its subcellular location is the nucleus. The enzyme catalyses ATP + H2O + closed Cl(-) channel = ADP + phosphate + open Cl(-) channel.. It catalyses the reaction chloride(in) = chloride(out). It carries out the reaction hydrogencarbonate(in) = hydrogencarbonate(out). The catalysed reaction is ATP + H2O = ADP + phosphate + H(+). Functionally, epithelial ion channel that plays an important role in the regulation of epithelial ion and water transport and fluid homeostasis. Mediates the transport of chloride ions across the cell membrane. Possesses an intrinsic ATPase activity and utilizes ATP to gate its channel; the passive flow of anions through the channel is gated by cycles of ATP binding and hydrolysis by the ATP-binding domains. The ion channel is also permeable to HCO(3)(-); selectivity depends on the extracellular chloride concentration. Exerts its function also by modulating the activity of other ion channels and transporters. Contributes to the regulation of the pH and the ion content of the epithelial fluid layer. Modulates the activity of the epithelial sodium channel (ENaC) complex, in part by regulating the cell surface expression of the ENaC complex. May regulate bicarbonate secretion and salvage in epithelial cells by regulating the transporter SLC4A7. Can inhibit the chloride channel activity of ANO1. Plays a role in the chloride and bicarbonate homeostasis during sperm epididymal maturation and capacitation. The polypeptide is Cystic fibrosis transmembrane conductance regulator (Didelphis virginiana (North American opossum)).